A 61-amino-acid chain; its full sequence is Small ribosomal subunit protein uS14 (61 aa).

The Zn(2+) site is built by Cys24, Cys27, Cys40, and Cys43.

Belongs to the universal ribosomal protein uS14 family. Zinc-binding uS14 subfamily. As to quaternary structure, part of the 30S ribosomal subunit. Contacts proteins S3 and S10. Zn(2+) is required as a cofactor.

In terms of biological role, binds 16S rRNA, required for the assembly of 30S particles and may also be responsible for determining the conformation of the 16S rRNA at the A site. This Nitratidesulfovibrio vulgaris (strain ATCC 29579 / DSM 644 / CCUG 34227 / NCIMB 8303 / VKM B-1760 / Hildenborough) (Desulfovibrio vulgaris) protein is Small ribosomal subunit protein uS14.